The following is a 316-amino-acid chain: Cell division protein ZipA (316 aa).

Residues 1–5 (MQELR) are Periplasmic-facing. Residues 6–26 (FVLIVVGALAIAALLFHGLWS) form a helical membrane-spanning segment. The Cytoplasmic segment spans residues 27-316 (SKKEGKAKFG…QIVEFNAANA (290 aa)). Positions 36–65 (GNKPLGKLDVDQGDKDSVEQERSFAPATED) are disordered. A compositionally biased stretch (basic and acidic residues) spans 41 to 57 (GKLDVDQGDKDSVEQER).

It belongs to the ZipA family. Interacts with FtsZ via their C-terminal domains.

It localises to the cell inner membrane. In terms of biological role, essential cell division protein that stabilizes the FtsZ protofilaments by cross-linking them and that serves as a cytoplasmic membrane anchor for the Z ring. Also required for the recruitment to the septal ring of downstream cell division proteins. The protein is Cell division protein ZipA of Vibrio parahaemolyticus serotype O3:K6 (strain RIMD 2210633).